The sequence spans 112 residues: Large ribosomal subunit protein uL22 (112 aa).

The protein belongs to the universal ribosomal protein uL22 family. In terms of assembly, part of the 50S ribosomal subunit.

In terms of biological role, this protein binds specifically to 23S rRNA; its binding is stimulated by other ribosomal proteins, e.g. L4, L17, and L20. It is important during the early stages of 50S assembly. It makes multiple contacts with different domains of the 23S rRNA in the assembled 50S subunit and ribosome. Its function is as follows. The globular domain of the protein is located near the polypeptide exit tunnel on the outside of the subunit, while an extended beta-hairpin is found that lines the wall of the exit tunnel in the center of the 70S ribosome. In Lawsonia intracellularis (strain PHE/MN1-00), this protein is Large ribosomal subunit protein uL22.